Consider the following 271-residue polypeptide: Shikimate dehydrogenase (NADP(+)) (271 aa).

Residues 14–16 and T61 each bind shikimate; that span reads SKS. K65 (proton acceptor) is an active-site residue. Residues N86 and D102 each contribute to the shikimate site. NADP(+) is bound by residues 126-130, 149-154, and M213; these read GAGGA and NRTFSR. Residue Y215 coordinates shikimate. Residue G238 participates in NADP(+) binding.

The protein belongs to the shikimate dehydrogenase family. Homodimer.

It carries out the reaction shikimate + NADP(+) = 3-dehydroshikimate + NADPH + H(+). The protein operates within metabolic intermediate biosynthesis; chorismate biosynthesis; chorismate from D-erythrose 4-phosphate and phosphoenolpyruvate: step 4/7. Functionally, involved in the biosynthesis of the chorismate, which leads to the biosynthesis of aromatic amino acids. Catalyzes the reversible NADPH linked reduction of 3-dehydroshikimate (DHSA) to yield shikimate (SA). This is Shikimate dehydrogenase (NADP(+)) from Histophilus somni (strain 2336) (Haemophilus somnus).